Consider the following 1046-residue polypeptide: Multidrug resistance protein MexB (1046 aa).

Residues 1–9 are Cytoplasmic-facing; it reads MSKFFIDRP. A helical transmembrane segment spans residues 10 to 28; sequence IFAWVIALVIMLAGGLSIL. Residues 29–339 lie on the Periplasmic side of the membrane; that stretch reads SLPVNQYPAI…TPVVSASIHE (311 aa). Residues 340–359 form a helical membrane-spanning segment; sequence VVKTLGEAILLVFLVMYLFL. The Cytoplasmic segment spans residues 360-365; it reads QNFRAT. The chain crosses the membrane as a helical span at residues 366–385; the sequence is LIPTIAVPVVLLGTFGVLAA. The Periplasmic portion of the chain corresponds to 386–391; that stretch reads FGFSIN. Residues 392 to 413 form a helical membrane-spanning segment; that stretch reads TLTMFGMVLAIGLLVDDAIVVV. Over 414–441 the chain is Cytoplasmic; it reads ENVERVMAEEGLSPREAARKSMGQIQGA. Residues 442–460 traverse the membrane as a helical segment; sequence LVGIAMVLSAVFLPMAFFG. Residues 461-473 are Periplasmic-facing; that stretch reads GSTGVIYRQFSIT. The chain crosses the membrane as a helical span at residues 474 to 496; sequence IVSAMALSVIVALILTPALCATM. Topologically, residues 497 to 538 are cytoplasmic; sequence LKPIEKGDHGEHKGGFFGWFNRMFLSTTHGYERGVASILKHR. A helical transmembrane segment spans residues 539–557; sequence APYLLIYVVIVAGMIWMFT. The Periplasmic portion of the chain corresponds to 558–871; it reads RIPTAFLPDE…SYEERLSGSQ (314 aa). The chain crosses the membrane as a helical span at residues 872–891; sequence APALYALSLLVVFLCLAALY. Residues 892–897 lie on the Cytoplasmic side of the membrane; that stretch reads ESWSIP. The helical transmembrane segment at 898–917 threads the bilayer; it reads FSVMLVVPLGVIGALLATSM. Residues 918–923 are Periplasmic-facing; that stretch reads RGLSND. Residues 924–945 traverse the membrane as a helical segment; the sequence is VFFQVGLLTTIGLSAKNAILIV. The Cytoplasmic portion of the chain corresponds to 946-972; the sequence is EFAKELHEQGKGIVEAAIEACRMRLRP. A helical transmembrane segment spans residues 973–991; that stretch reads IVMTSLAFILGVVPLAIST. The Periplasmic portion of the chain corresponds to 992–1004; that stretch reads GAGSGSQHAIGTG. Residues 1005–1027 form a helical membrane-spanning segment; the sequence is VIGGMVTATVLAIFWVPLFYVAV. Over 1028–1046 the chain is Cytoplasmic; sequence STLFKDEASKQQASVEKGQ.

This sequence belongs to the resistance-nodulation-cell division (RND) (TC 2.A.6) family. In terms of assembly, component of the MexAB-OprM multidrug efflux complex, composed of six MexA subunits forming a hexameric tube, binding to a MexB trimer, which interact with the trimeric OprM outer membrane channel protein. OprM is thought to not directly contact MexB; instead, MexA joins MexB and OprM by forming a funnel-like hexamer anchored to the inner membrane. MexA may initially form a hexameric ring complex with MexB prior to OprM, then OprM undergoes a conformational change as it contacts MexA, allowing the periplasmic gate to open. It is thought that, under high intracellular substrate concentration, MexB ejects substrate into the tunnel formed by MexA-OprM; as the substrate level declines, conformational changes in MexB cause efflux to reduce and stop and the complex shifts to the closed state. Acts as a substrate:proton antiporter and activity is enhanced significantly when in complex with MexA and OprM, in vitro.

The protein resides in the cell inner membrane. Its activity is regulated as follows. Export of antibiotics and solvents is dramatically decreased in the presence of the protonophore carbonyl cyanide m-chlorophenylhydrazone (CCCP), therefore may be driven by a proton gradient. Antibiotic efflux is inhibited by pyridopyrimidine derivatives, such as ABI-PP, acting by binding to a hydrophobic pocket in MexB. Functionally, the inner membrane transporter component of the MexAB-OprM efflux system that confers multidrug resistance. Functions as the major efflux pump for n-hexane and p-xylene efflux. Has been shown in one study to be involved in the active efflux of the autoinducer N-(3-oxododecanoyl) homoserine lactone, thereby playing an indirect role in quorum-sensing; but has been shown in another study not to be involved in efflux of this autoinducer. Over-expression of the pump increases antibiotic and solvent efflux capacities. Implicated in the secretion of the siderophore pyoverdine. This chain is Multidrug resistance protein MexB (mexB), found in Pseudomonas aeruginosa (strain ATCC 15692 / DSM 22644 / CIP 104116 / JCM 14847 / LMG 12228 / 1C / PRS 101 / PAO1).